We begin with the raw amino-acid sequence, 170 residues long: Large ribosomal subunit protein uL10 (170 aa).

This sequence belongs to the universal ribosomal protein uL10 family. As to quaternary structure, part of the ribosomal stalk of the 50S ribosomal subunit. The N-terminus interacts with L11 and the large rRNA to form the base of the stalk. The C-terminus forms an elongated spine to which L12 dimers bind in a sequential fashion forming a multimeric L10(L12)X complex.

Functionally, forms part of the ribosomal stalk, playing a central role in the interaction of the ribosome with GTP-bound translation factors. This Chlamydia caviae (strain ATCC VR-813 / DSM 19441 / 03DC25 / GPIC) (Chlamydophila caviae) protein is Large ribosomal subunit protein uL10.